The chain runs to 379 residues: Cytoplasmic tRNA 2-thiolation protein 1 (379 aa).

Belongs to the TtcA family. CTU1/NCS6/ATPBD3 subfamily.

Its subcellular location is the cytoplasm. The protein operates within tRNA modification; 5-methoxycarbonylmethyl-2-thiouridine-tRNA biosynthesis. Plays a central role in 2-thiolation of mcm(5)S(2)U at tRNA wobble positions of tRNA(Lys), tRNA(Glu) and tRNA(Gln). Directly binds tRNAs and probably acts by catalyzing adenylation of tRNAs, an intermediate required for 2-thiolation. It is unclear whether it acts as a sulfurtransferase that transfers sulfur from thiocarboxylated URM1 onto the uridine of tRNAs at wobble position. Prior mcm(5) tRNA modification by the elongator complex is required for 2-thiolation. May also be involved in protein urmylation. This chain is Cytoplasmic tRNA 2-thiolation protein 1, found in Lodderomyces elongisporus (strain ATCC 11503 / CBS 2605 / JCM 1781 / NBRC 1676 / NRRL YB-4239) (Yeast).